The chain runs to 359 residues: Peptide chain release factor 1 (359 aa).

The residue at position 238 (glutamine 238) is an N5-methylglutamine.

Belongs to the prokaryotic/mitochondrial release factor family. Post-translationally, methylated by PrmC. Methylation increases the termination efficiency of RF1.

It is found in the cytoplasm. In terms of biological role, peptide chain release factor 1 directs the termination of translation in response to the peptide chain termination codons UAG and UAA. This Rhodococcus jostii (strain RHA1) protein is Peptide chain release factor 1.